Here is a 172-residue protein sequence, read N- to C-terminus: MDRAQKEKVVEELGQIFESSGVVVVAHYAGLTVAEMQDLRARAREAGGSVRVAKNRLAKIALEGKPCASMADLLTGMTVLTYSEDPVAAAKVAEGFAKDNKKFEILGGAMGENALDRAGVEAVSKMPSREELIAQIVSCIGAPASNIAGAIGAPASNIAGILSTIIEKAEAA.

Belongs to the universal ribosomal protein uL10 family. As to quaternary structure, part of the ribosomal stalk of the 50S ribosomal subunit. The N-terminus interacts with L11 and the large rRNA to form the base of the stalk. The C-terminus forms an elongated spine to which L12 dimers bind in a sequential fashion forming a multimeric L10(L12)X complex.

Its function is as follows. Forms part of the ribosomal stalk, playing a central role in the interaction of the ribosome with GTP-bound translation factors. The sequence is that of Large ribosomal subunit protein uL10 from Ruegeria pomeroyi (strain ATCC 700808 / DSM 15171 / DSS-3) (Silicibacter pomeroyi).